The following is a 365-amino-acid chain: MKQEKERILKLVEEGKLTAQEALTLIEKLDSDYKEKEEKITALSVHVHDEEEPFTTAKKESGKPSLGAKLFDWIDSAVKKVKEVDLDLNFGHAYDVQHIFQFKDTDFSSVELQIANGSVNIVPWEDDDIRAECQAKVYRADSQDAARHAFLQHIECEIKGNKFFIRTEKKTMKTNVTLYIPQKEYDKIRVKLFNGPVRGEHLHVKEFSAKTTNGVLSFSYLTAEKAIAETANGQIKLASHSCGTIEAETINGLIDLRGKSESIDVQSFNGNIAINVTESDCRSIYAKTTTGNVELAIPDDLAVKAELKSNLGTLSHELMDVEMLKEKNDTIQKEMMFTSNQAHDQNITVFSESLTGAIKLKYSQR.

A coiled-coil region spans residues 18 to 46 (TAQEALTLIEKLDSDYKEKEEKITALSVH).

This is an uncharacterized protein from Bacillus subtilis (strain 168).